The sequence spans 295 residues: UTP--glucose-1-phosphate uridylyltransferase (295 aa).

Belongs to the UDPGP type 2 family.

It catalyses the reaction alpha-D-glucose 1-phosphate + UTP + H(+) = UDP-alpha-D-glucose + diphosphate. Its function is as follows. May play a role in stationary phase survival. The chain is UTP--glucose-1-phosphate uridylyltransferase (galU) from Haemophilus ducreyi (strain 35000HP / ATCC 700724).